Consider the following 287-residue polypeptide: Glucose import system permease protein GlcU (287 aa).

7 helical membrane-spanning segments follow: residues 14–34 (HYLALAIVSVIWLIPVYAMLI), 76–96 (IIVIPTSFISAFLGAMGAYFF), 113–133 (VLFSLISLATFIPQEATLLPL), 149–169 (IIFALLIFYIPTGALLMSMFI), 194–214 (IVFPLSMPGFISTLIFIIIQA), 218–238 (FFIPLVLVTTPGMKLTSIAVL), and 250–270 (DTFAAGMVASIIPLAIFVFLG). The region spanning 71-269 (LINSLIIVIP…IIPLAIFVFL (199 aa)) is the ABC transmembrane type-1 domain.

It belongs to the binding-protein-dependent transport system permease family. As to quaternary structure, the complex is composed of two ATP-binding proteins (GlcV), two transmembrane proteins (GlcT and GlcU) and a solute-binding protein (GlcS).

The protein resides in the cell membrane. In terms of biological role, part of the ABC transporter complex GlcSTUV involved in glucose uptake. Responsible for the translocation of the substrate across the membrane. The sequence is that of Glucose import system permease protein GlcU from Saccharolobus solfataricus (strain ATCC 35092 / DSM 1617 / JCM 11322 / P2) (Sulfolobus solfataricus).